Reading from the N-terminus, the 244-residue chain is Small ribosomal subunit protein uS3 (244 aa).

One can recognise a KH type-2 domain in the interval 39–107; it reads MRKFVMSELK…ETHLNIVEVR (69 aa). The tract at residues 214–244 is disordered; sequence ASERRALEGDAQGPASRERDRGDRRRERDNA. Positions 229–244 are enriched in basic and acidic residues; that stretch reads SRERDRGDRRRERDNA.

The protein belongs to the universal ribosomal protein uS3 family. Part of the 30S ribosomal subunit. Forms a tight complex with proteins S10 and S14.

Its function is as follows. Binds the lower part of the 30S subunit head. Binds mRNA in the 70S ribosome, positioning it for translation. This is Small ribosomal subunit protein uS3 from Rhizobium etli (strain CIAT 652).